A 72-amino-acid chain; its full sequence is Dermaseptin-A4 (72 aa).

Residues 1–22 form the signal peptide; the sequence is MAFLKKSLFLVLFLGMVSLSIC. Residues 23 to 41 constitute a propeptide that is removed on maturation; sequence EEEKREEENEQEDDEQSEE. The interval 24–43 is disordered; the sequence is EEKREEENEQEDDEQSEEKR. The segment covering 30 to 39 has biased composition (acidic residues); that stretch reads ENEQEDDEQS. Alanine 69 carries the post-translational modification Alanine amide. The propeptide occupies 71 to 72; the sequence is EQ.

Belongs to the frog skin active peptide (FSAP) family. Dermaseptin subfamily. Expressed by the skin glands.

It localises to the secreted. Functionally, possesses a potent antimicrobial activity against Gram-positive and Gram-negative bacteria. Probably acts by disturbing membrane functions with its amphipathic structure. This Agalychnis annae (Blue-sided leaf frog) protein is Dermaseptin-A4.